The sequence spans 120 residues: Large ribosomal subunit protein uL18 (120 aa).

It belongs to the universal ribosomal protein uL18 family. In terms of assembly, part of the 50S ribosomal subunit; part of the 5S rRNA/L5/L18/L25 subcomplex. Contacts the 5S and 23S rRNAs.

Functionally, this is one of the proteins that bind and probably mediate the attachment of the 5S RNA into the large ribosomal subunit, where it forms part of the central protuberance. The protein is Large ribosomal subunit protein uL18 of Bacillus cereus (strain AH820).